Consider the following 826-residue polypeptide: Ferric-pyoverdine M114 receptor PbuA (826 aa).

An N-terminal signal peptide occupies residues 1 to 44 (MSASRFMLRPLTRALLMHGATRTRLAGTGLGLALTLTAAPYVQA). The short motif at 110–119 (DGNTVTVLGP) is the TonB box element. The 112-residue stretch at 160-271 (SLKETPQSVT…TAGGVNFVRK (112 aa)) folds into the TBDR plug domain. The TBDR beta-barrel domain occupies 276 to 826 (TAHTQLSLSA…NFVMSVKADF (551 aa)). The TonB C-terminal box motif lies at 809 to 826 (GNFYGDPRNFVMSVKADF).

This sequence belongs to the TonB-dependent receptor family.

The protein resides in the cell outer membrane. Its function is as follows. Specific receptor for the siderophore ferric pyoverdine (pseudobactin) M114. The chain is Ferric-pyoverdine M114 receptor PbuA (pbuA) from Pseudomonas sp. (strain M114).